A 557-amino-acid polypeptide reads, in one-letter code: MGTKTHNSRGKIFMIYLILVSLSLLGLILPFKPLFRITSPSSTLRIDLPSPQVNKNPKWLRLIRNYLPEKRIQVGFLNIDEKERESYEARGPLVLKNIHVPLDHIPKNVTWKSLYPEWINEEASTCPEIPLPQPEGSDANVDVIVARVPCDGWSANKGLRDVFRLQVNLAAANLAVQSGLRTVNQAVYVVFIGSCGPMHEIFPCDERVMRVEDYWVYKPYLPRLKQKLLMPVGSCQIAPSFAQFGQEAWRPKHEDNLASKAVTALPRRLRVAYVTVLHSSEAYVCGAIALAQSIRQSGSHKDMILLHDHTITNKSLIGLSAAGWNLRLIDRIRSPFSQKDSYNEWNYSKLRVWQVTDYDKLVFIDADFIILKKLDHLFYYPQLSASGNDKVLFNSGIMVLEPSACMFKDLMEKSFKIESYNGGDQGFLNEIFVWWHRLSKRVNTMKYFDEKNHRRHDLPENVEGLHYLGLKPWVCYRDYDCNWDISERRVFASDSVHEKWWKVYDKMSEQLKGYCGLNKNMEKRIEKWRRIAKNNSLPDRHWEIEVRDPRKTNLLVQ.

A helical; Signal-anchor for type II membrane protein transmembrane segment spans residues 11-31 (KIFMIYLILVSLSLLGLILPF). Positions 365 and 367 each coordinate Mn(2+). Substrate contacts are provided by residues 365-367 (DAD), 394-396 (NSG), 421-425 (NGGDQ), and 466-471 (HYLGLK). Position 466 (His466) interacts with Mn(2+).

Belongs to the glycosyltransferase 8 family. Glycogenin subfamily. Mn(2+) serves as cofactor.

The protein resides in the golgi apparatus membrane. Its function is as follows. May be involved in the substitutions of the xylan backbone in stem glucuronoxylan. This Arabidopsis thaliana (Mouse-ear cress) protein is Putative UDP-glucuronate:xylan alpha-glucuronosyltransferase 4 (GUX4).